The primary structure comprises 378 residues: Lactosylceramide 1,3-N-acetyl-beta-D-glucosaminyltransferase (378 aa).

Residues 1 to 14 are Cytoplasmic-facing; it reads MRMLVSGRRVKKWQ. The chain crosses the membrane as a helical; Signal-anchor for type II membrane protein span at residues 15 to 35; sequence LIIQLFATCFLASLMFFWEPI. Over 36–378 the chain is Lumenal; sequence DNHIVSHMKS…DTYPCRAAFI (343 aa). An N-linked (GlcNAc...) asparagine glycan is attached at asparagine 59.

This sequence belongs to the glycosyltransferase 31 family. Widely expressed. Highly expressed in lung, colon, placenta, testis, pituitary gland and cerebellum. Weakly expressed in brain, liver, spleen, lymph node and thymus.

Its subcellular location is the golgi apparatus membrane. It carries out the reaction a beta-D-Gal-(1-&gt;4)-beta-D-Glc-(1&lt;-&gt;1)-Cer(d18:1(4E)) + UDP-N-acetyl-alpha-D-glucosamine = a beta-D-GlcNAc-(1-&gt;3)-beta-D-Gal-(1-&gt;4)-beta-D-Glc-(1&lt;-&gt;1)-Cer(d18:1(4E)) + UDP + H(+). The catalysed reaction is a neolactoside nLc4Cer(d18:1(4E)) + UDP-N-acetyl-alpha-D-glucosamine = a neolactoside IV(3)-beta-GlcNAc-nLc4Cer(d18:1(4E)) + UDP + H(+). It participates in protein modification; protein glycosylation. Its function is as follows. Beta-1,3-N-acetylglucosaminyltransferase that plays a key role in the synthesis of lacto- or neolacto-series carbohydrate chains on glycolipids, notably by participating in biosynthesis of HNK-1 and Lewis X carbohydrate structures. Has strong activity toward lactosylceramide (LacCer) and neolactotetraosylceramide (nLc(4)Cer; paragloboside), resulting in the synthesis of Lc(3)Cer and neolactopentaosylceramide (nLc(5)Cer), respectively. Probably plays a central role in regulating neolacto-series glycolipid synthesis during embryonic development. This is Lactosylceramide 1,3-N-acetyl-beta-D-glucosaminyltransferase from Homo sapiens (Human).